The sequence spans 223 residues: Twisted gastrulation protein homolog 1 (223 aa).

Residues 1-25 form the signal peptide; the sequence is MKLHYVAVLTLAILMFLTWLPESLS. N-linked (GlcNAc...) asparagine glycosylation is found at Asn52 and Asn81.

This sequence belongs to the twisted gastrulation protein family. As to quaternary structure, interacts with CHRD and BMP4. This interaction enhances CHRD/BMP4 complex formation. Interacts with BMP7.

It localises to the secreted. Its function is as follows. May be involved in dorsoventral axis formation. Seems to antagonize BMP signaling by forming ternary complexes with CHRD and BMPs, thereby preventing BMPs from binding to their receptors. In addition to the anti-BMP function, also has pro-BMP activity, partly mediated by cleavage and degradation of CHRD, which releases BMPs from ternary complexes. May be an important modulator of BMP-regulated cartilage development and chondrocyte differentiation. May play a role in thymocyte development. This Homo sapiens (Human) protein is Twisted gastrulation protein homolog 1 (TWSG1).